The following is a 425-amino-acid chain: Tol-Pal system protein TolB (425 aa).

Residues 1-22 (MRNFLYCTGVLLLLWMSTSSQA) form the signal peptide.

Belongs to the TolB family. The Tol-Pal system is composed of five core proteins: the inner membrane proteins TolA, TolQ and TolR, the periplasmic protein TolB and the outer membrane protein Pal. They form a network linking the inner and outer membranes and the peptidoglycan layer.

Its subcellular location is the periplasm. Part of the Tol-Pal system, which plays a role in outer membrane invagination during cell division and is important for maintaining outer membrane integrity. This chain is Tol-Pal system protein TolB, found in Nitrosomonas europaea (strain ATCC 19718 / CIP 103999 / KCTC 2705 / NBRC 14298).